The following is a 79-amino-acid chain: RNA-binding protein Hfq (79 aa).

The region spanning 10-70 (DVFLNTVRKQ…ISTIMPGQPV (61 aa)) is the Sm domain.

It belongs to the Hfq family. As to quaternary structure, homohexamer.

In terms of biological role, RNA chaperone that binds small regulatory RNA (sRNAs) and mRNAs to facilitate mRNA translational regulation in response to envelope stress, environmental stress and changes in metabolite concentrations. Also binds with high specificity to tRNAs. In Bartonella tribocorum (strain CIP 105476 / IBS 506), this protein is RNA-binding protein Hfq.